The following is a 315-amino-acid chain: tRNA dimethylallyltransferase (315 aa).

13 to 20 (GPTAVGKT) contacts ATP. 15–20 (TAVGKT) contacts substrate. The segment at 38 to 41 (DSMQ) is interaction with substrate tRNA.

This sequence belongs to the IPP transferase family. Monomer. Requires Mg(2+) as cofactor.

It carries out the reaction adenosine(37) in tRNA + dimethylallyl diphosphate = N(6)-dimethylallyladenosine(37) in tRNA + diphosphate. Functionally, catalyzes the transfer of a dimethylallyl group onto the adenine at position 37 in tRNAs that read codons beginning with uridine, leading to the formation of N6-(dimethylallyl)adenosine (i(6)A). This chain is tRNA dimethylallyltransferase, found in Staphylococcus saprophyticus subsp. saprophyticus (strain ATCC 15305 / DSM 20229 / NCIMB 8711 / NCTC 7292 / S-41).